Consider the following 204-residue polypeptide: Large ribosomal subunit protein eL15y (204 aa).

It belongs to the eukaryotic ribosomal protein eL15 family.

The chain is Large ribosomal subunit protein eL15y (SB62) from Picea mariana (Black spruce).